A 1900-amino-acid chain; its full sequence is Phosphatidylinositol 4-kinase STT4 (1900 aa).

Ser-459 bears the Phosphoserine mark. A PIK helical domain is found at 1345 to 1530 (KIEGADSNEL…KPTLDRIRER (186 aa)). The segment at 1531–1648 (MVSSFSQSHR…EKWQAAIFKV (118 aa)) is pleckstrin homology (PH) domain conferring phosphoinositide binding specificity. Residues 1617–1884 (FMATFKIKKD…LIRKSYESIF (268 aa)) form the PI3K/PI4K catalytic domain. The interval 1623–1629 (IKKDVKD) is G-loop. Positions 1751–1759 (QFKDRHNGN) are catalytic loop. The segment at 1770 to 1794 (HIDFGFIFDIVPGGIKFEAVPFKLT) is activation loop.

The protein belongs to the PI3/PI4-kinase family. Type III PI4K subfamily.

The catalysed reaction is a 1,2-diacyl-sn-glycero-3-phospho-(1D-myo-inositol) + ATP = a 1,2-diacyl-sn-glycero-3-phospho-(1D-myo-inositol 4-phosphate) + ADP + H(+). Its function is as follows. Acts on phosphatidylinositol (PI) in the first committed step in the production of the second messenger inositol 1,4,5,-trisphosphate. STT4 functions in PKC1 protein kinase pathway. This Saccharomyces cerevisiae (strain ATCC 204508 / S288c) (Baker's yeast) protein is Phosphatidylinositol 4-kinase STT4 (STT4).